The chain runs to 454 residues: tRNA modification GTPase MnmE (454 aa).

The (6S)-5-formyl-5,6,7,8-tetrahydrofolate site is built by Arg-23, Glu-80, and Lys-120. One can recognise a TrmE-type G domain in the interval 216–377; that stretch reads GMKVVIAGRP…LRNHLKQSMG (162 aa). A K(+)-binding site is contributed by Asn-226. Residues 226–231, 245–251, 270–273, 335–338, and 358–360 contribute to the GTP site; these read NAGKSS, TDIAGTT, DTAG, NKAD, and SAR. Residue Ser-230 coordinates Mg(2+). Residues Thr-245, Ile-247, and Thr-250 each coordinate K(+). Residue Thr-251 participates in Mg(2+) binding. Residue Lys-454 participates in (6S)-5-formyl-5,6,7,8-tetrahydrofolate binding.

It belongs to the TRAFAC class TrmE-Era-EngA-EngB-Septin-like GTPase superfamily. TrmE GTPase family. As to quaternary structure, homodimer. Heterotetramer of two MnmE and two MnmG subunits. K(+) serves as cofactor.

It localises to the cytoplasm. Functionally, exhibits a very high intrinsic GTPase hydrolysis rate. Involved in the addition of a carboxymethylaminomethyl (cmnm) group at the wobble position (U34) of certain tRNAs, forming tRNA-cmnm(5)s(2)U34. The chain is tRNA modification GTPase MnmE from Shigella boydii serotype 18 (strain CDC 3083-94 / BS512).